The sequence spans 101 residues: Urease subunit beta (101 aa).

The protein belongs to the urease beta subunit family. As to quaternary structure, heterotrimer of UreA (gamma), UreB (beta) and UreC (alpha) subunits. Three heterotrimers associate to form the active enzyme.

The protein localises to the cytoplasm. The catalysed reaction is urea + 2 H2O + H(+) = hydrogencarbonate + 2 NH4(+). Its pathway is nitrogen metabolism; urea degradation; CO(2) and NH(3) from urea (urease route): step 1/1. In Burkholderia orbicola (strain AU 1054), this protein is Urease subunit beta.